A 173-amino-acid polypeptide reads, in one-letter code: uncharacterized protein (173 aa).

This is an uncharacterized protein from Bacillus subtilis (strain 168).